Reading from the N-terminus, the 157-residue chain is Ribosome maturation factor RimP (157 aa).

This sequence belongs to the RimP family.

It localises to the cytoplasm. Required for maturation of 30S ribosomal subunits. This is Ribosome maturation factor RimP from Bacillus pumilus (strain SAFR-032).